A 205-amino-acid chain; its full sequence is Holliday junction branch migration complex subunit RuvA (205 aa).

Residues 1–62 (MFEYVTGYVE…EDIMALYGFK (62 aa)) are domain I. Residues 63–141 (TREERLLFTK…DVVPDAFVDL (79 aa)) are domain II. The segment at 142–152 (FSDTERFDEKK) is flexible linker. The segment at 153–205 (GTSAELDEALEALRALGYAEREVSRVVPELLKESLTTDQYIKKALSLLLNGKR) is domain III.

It belongs to the RuvA family. In terms of assembly, homotetramer. Forms an RuvA(8)-RuvB(12)-Holliday junction (HJ) complex. HJ DNA is sandwiched between 2 RuvA tetramers; dsDNA enters through RuvA and exits via RuvB. An RuvB hexamer assembles on each DNA strand where it exits the tetramer. Each RuvB hexamer is contacted by two RuvA subunits (via domain III) on 2 adjacent RuvB subunits; this complex drives branch migration. In the full resolvosome a probable DNA-RuvA(4)-RuvB(12)-RuvC(2) complex forms which resolves the HJ.

The protein resides in the cytoplasm. Functionally, the RuvA-RuvB-RuvC complex processes Holliday junction (HJ) DNA during genetic recombination and DNA repair, while the RuvA-RuvB complex plays an important role in the rescue of blocked DNA replication forks via replication fork reversal (RFR). RuvA specifically binds to HJ cruciform DNA, conferring on it an open structure. The RuvB hexamer acts as an ATP-dependent pump, pulling dsDNA into and through the RuvAB complex. HJ branch migration allows RuvC to scan DNA until it finds its consensus sequence, where it cleaves and resolves the cruciform DNA. This Bacillus cereus (strain G9842) protein is Holliday junction branch migration complex subunit RuvA.